Consider the following 1243-residue polypeptide: Protein MMS22-like (1243 aa).

It belongs to the MMS22 family. MMS22L subfamily. Component of the MMS22L-TONSL complex, a complex at least composed of MMS22L and TONSL/NFKBIL2. Interacts with RAD51; interaction is direct. Degraded by the ubiquitin-proteasome system upon replication stress.

It is found in the nucleus. Its subcellular location is the chromosome. Component of the MMS22L-TONSL complex, a complex that promotes homologous recombination-mediated repair of double-strand breaks (DSBs) at stalled or collapsed replication forks. The MMS22L-TONSL complex is required to maintain genome integrity during DNA replication. It mediates the assembly of RAD51 filaments on single-stranded DNA (ssDNA): the MMS22L-TONSL complex is recruited to DSBs following histone replacement by histone chaperones and eviction of the replication protein A complex (RPA/RP-A) from DSBs. Following recruitment to DSBs, the TONSL-MMS22L complex promotes recruitment of RAD51 filaments and subsequent homologous recombination. Within the complex, MMS22L acts by binding ssDNA. This Homo sapiens (Human) protein is Protein MMS22-like.